The sequence spans 223 residues: Nicotinamide/nicotinic acid mononucleotide adenylyltransferase 2 (223 aa).

NAD(+) is bound by residues Ser-11 and Phe-12. His-19 provides a ligand contact to ATP. NAD(+) contacts are provided by Trp-87, Thr-90, Gly-116, Asp-118, Leu-133, Trp-134, and Arg-153. ATP is bound at residue 190–191 (TR).

It belongs to the eukaryotic NMN adenylyltransferase family. A divalent metal cation serves as cofactor.

The catalysed reaction is beta-nicotinamide D-ribonucleotide + ATP + H(+) = diphosphate + NAD(+). It carries out the reaction nicotinate beta-D-ribonucleotide + ATP + H(+) = deamido-NAD(+) + diphosphate. The protein operates within cofactor biosynthesis; NAD(+) biosynthesis; deamido-NAD(+) from nicotinate D-ribonucleotide: step 1/1. It functions in the pathway cofactor biosynthesis; NAD(+) biosynthesis; NAD(+) from nicotinamide D-ribonucleotide: step 1/1. Catalyzes the formation of NAD(+) from nicotinamide mononucleotide (NMN) and ATP. Can also use the deamidated form; nicotinic acid mononucleotide (NaMN) as substrate. The chain is Nicotinamide/nicotinic acid mononucleotide adenylyltransferase 2 from Caenorhabditis elegans.